Reading from the N-terminus, the 355-residue chain is Tetraspanin-10 (355 aa).

The segment at 1–33 is disordered; the sequence is MEEGERSPLLSQETAGQKPLSVHRPPTSGCLGP. Topologically, residues 1–78 are cytoplasmic; it reads MEEGERSPLL…LSPGSSCVKY (78 aa). Residues 79-99 traverse the membrane as a helical segment; that stretch reads LIFLSNFPFSLLGLLALAIGL. The Extracellular segment spans residues 100-120; it reads WGLAVKGSLGSDLGGPLPTDP. The chain crosses the membrane as a helical span at residues 121 to 141; sequence MLGLALGGLVVSAASLAGCLG. Topologically, residues 142-154 are cytoplasmic; it reads ALCENTCLLRGFS. A helical transmembrane segment spans residues 155 to 175; sequence GGILAFLVLEAVAGALVVALW. The Extracellular portion of the chain corresponds to 176-355; sequence GPLQDSLEHT…APPAAKPARG (180 aa). 4 disulfides stabilise this stretch: Cys212–Cys279, Cys213–Cys243, Cys229–Cys237, and Cys244–Cys258. A glycan (N-linked (GlcNAc...) asparagine) is linked at Asn228. The tract at residues 327 to 355 is disordered; it reads YGPGAHGEDRAGPQSPSPGAPPAAKPARG. Positions 341–355 are enriched in pro residues; that stretch reads SPSPGAPPAAKPARG.

This sequence belongs to the tetraspanin (TM4SF) family. As to quaternary structure, interacts with ADAM10. Expressed in the eye, including iris, ciliary body, retinal pigment epithelium, but not lens (protein level).

The protein localises to the cell membrane. Functionally, part of TspanC8 subgroup, composed of 6 members that interact with the transmembrane metalloprotease ADAM10. This interaction is required for ADAM10 exit from the endoplasmic reticulum and for enzymatic maturation and trafficking to the cell surface as well as substrate specificity. Different TspanC8/ADAM10 complexes have distinct substrates. The polypeptide is Tetraspanin-10 (Homo sapiens (Human)).